Here is an 872-residue protein sequence, read N- to C-terminus: Paramyosin (872 aa).

The tract at residues 1-31 is nonhelical region; that stretch reads MSLYRSPSAALLKSPSQAAFGAPFGSMSVAD. The stretch at 32–851 forms a coiled coil; that stretch reads LGSLTRLEDK…ESSLHLIRAK (820 aa). An interaction with unc-89 region spans residues 294 to 376; it reads EITQWKSKFD…ALLERAREQL (83 aa). Residues 856–866 are nonhelical region; that stretch reads VVTGKSSSKIF.

The protein belongs to the paramyosin family. Homodimer. May interact with unc-89 (via SH3 domain). In terms of processing, phosphorylated on serine residues in the N-terminal non-helical region. In terms of tissue distribution, expressed in body wall muscles of larvae and adults (at protein level). Expressed in gonadal myoepithelial sheath cells (at protein level).

The protein localises to the cytoplasm. The protein resides in the myofibril. It is found in the sarcomere. It localises to the a band. Structural component of the muscle thick filaments which is involved in assembly and organization of sarcomere myofilaments. Involved in ovulation. Plays a role in the formation of muscle connections, also called muscle arm extensions, between the body wall and the motor axons in the dorsal and ventral cord. In Caenorhabditis elegans, this protein is Paramyosin (unc-15).